The sequence spans 394 residues: 2-oxoglutarate and iron-dependent oxygenase domain-containing protein CP2 (394 aa).

The tract at residues 1–35 (MSSEQREGSQETTTTTVEGNGTIAGQNSHSAAPTT) is disordered. Over residues 17–35 (VEGNGTIAGQNSHSAAPTT) the composition is skewed to polar residues. The Fe2OG dioxygenase domain occupies 248–347 (DSHHGFVVEY…RVNMLLWCRS (100 aa)). His-268, Asp-270, and His-328 together coordinate Fe cation. Arg-338 lines the 2-oxoglutarate pocket.

Fe(2+) is required as a cofactor. It depends on L-ascorbate as a cofactor. Expressed in roots, cotyledons, rosette leaves, cauline leaves, inflorescences and siliques.

The protein localises to the nucleus. Its subcellular location is the nucleoplasm. In terms of biological role, participates in the epigenetic repression of flowering genes in association with ICU11. Functions in the repression of several members of the MADS-box transcription factors family, including SEP3, during vegetative development via histone modification. The chain is 2-oxoglutarate and iron-dependent oxygenase domain-containing protein CP2 from Arabidopsis thaliana (Mouse-ear cress).